Consider the following 222-residue polypeptide: UPF0502 protein Shewmr7_1629 (222 aa).

This sequence belongs to the UPF0502 family.

This Shewanella sp. (strain MR-7) protein is UPF0502 protein Shewmr7_1629.